Consider the following 348-residue polypeptide: MTYNIVALPGDGIGPEILNGSLSLLEIISNKYNFNYQIEHHEFGGASIDTFGEPLTEKTLNACKRADAILLGAIGGPKWTDPNNRPEQGLLKLRKSLNLFANIRPTTVVKGASSLSPLKEERVEGTDLVIVRELTSGIYFGEPRHFNNHEALDSLTYTREEIERIVHVAFKLAASRRGKLTSVDKENVLASSKLWRKVVNEVSQLYPEVTVNHLLVDACSMHLITNPKQFDVIVCENLFGDILSDEASVIPGSLGLSPSASFSNDGPRLYEPIHGSAPDIAGKNVANPFGMILSLAMCLRESLNQPDAADELEQHIYNMIEHGQTTADLGGKLNTTDIFEILSQKLNH.

An NAD(+)-binding site is contributed by 76 to 87 (GPKWTDPNNRPE). Substrate contacts are provided by Arg-94, Arg-104, Arg-132, and Asp-217. Positions 217, 241, and 245 each coordinate Mg(2+). 275–287 (GSAPDIAGKNVAN) lines the NAD(+) pocket.

This sequence belongs to the isocitrate and isopropylmalate dehydrogenases family. LeuB type 1 subfamily. As to quaternary structure, homodimer. The cofactor is Mg(2+). Mn(2+) is required as a cofactor.

It localises to the cytoplasm. It carries out the reaction (2R,3S)-3-isopropylmalate + NAD(+) = 4-methyl-2-oxopentanoate + CO2 + NADH. Its pathway is amino-acid biosynthesis; L-leucine biosynthesis; L-leucine from 3-methyl-2-oxobutanoate: step 3/4. Catalyzes the oxidation of 3-carboxy-2-hydroxy-4-methylpentanoate (3-isopropylmalate) to 3-carboxy-4-methyl-2-oxopentanoate. The product decarboxylates to 4-methyl-2 oxopentanoate. This chain is 3-isopropylmalate dehydrogenase, found in Staphylococcus aureus (strain Mu50 / ATCC 700699).